Reading from the N-terminus, the 252-residue chain is Fluoroquinolones export permease protein MT2760 (252 aa).

6 helical membrane-spanning segments follow: residues 31–51, 69–89, 119–139, 148–168, 176–196, and 224–244; these read VMLVIAPVIWTTGVALLTPLF, LILTAFLLLTSIIVAGALAAF, ATVMVVTTIYVVATMSCSGIL, IPIGLVAGLSAVVTLLLILAV, LAMVRALGMLIAGLPCLPWFI, and TWWPYLVGGAVYNLAIVWVLF.

The complex is composed of 2 ATP-binding proteins and 2 transmembrane proteins.

Its subcellular location is the cell membrane. Part of the ABC transporter complex involved in fluoroquinolones export. Probably responsible for the translocation of the substrate across the membrane. The sequence is that of Fluoroquinolones export permease protein MT2760 from Mycobacterium tuberculosis (strain CDC 1551 / Oshkosh).